We begin with the raw amino-acid sequence, 122 residues long: Large ribosomal subunit protein uL14 (122 aa).

This sequence belongs to the universal ribosomal protein uL14 family. Part of the 50S ribosomal subunit. Forms a cluster with proteins L3 and L19. In the 70S ribosome, L14 and L19 interact and together make contacts with the 16S rRNA in bridges B5 and B8.

Functionally, binds to 23S rRNA. Forms part of two intersubunit bridges in the 70S ribosome. The polypeptide is Large ribosomal subunit protein uL14 (Oenococcus oeni (strain ATCC BAA-331 / PSU-1)).